The following is a 181-amino-acid chain: UPF0316 protein Bcer98_2136 (181 aa).

Transmembrane regions (helical) follow at residues 6 to 26 (LIFV…ILLV), 32 to 52 (SAAG…GIVF), and 58 to 78 (WMNI…GGYI).

It belongs to the UPF0316 family.

The protein resides in the cell membrane. This is UPF0316 protein Bcer98_2136 from Bacillus cytotoxicus (strain DSM 22905 / CIP 110041 / 391-98 / NVH 391-98).